The following is a 72-amino-acid chain: Translation initiation factor IF-1 (72 aa).

One can recognise an S1-like domain in the interval M1–K72. Phosphotyrosine is present on Y60.

It belongs to the IF-1 family. As to quaternary structure, component of the 30S ribosomal translation pre-initiation complex which assembles on the 30S ribosome in the order IF-2 and IF-3, IF-1 and N-formylmethionyl-tRNA(fMet); mRNA recruitment can occur at any time during PIC assembly.

Its subcellular location is the cytoplasm. One of the essential components for the initiation of protein synthesis. Stabilizes the binding of IF-2 and IF-3 on the 30S subunit to which N-formylmethionyl-tRNA(fMet) subsequently binds. Helps modulate mRNA selection, yielding the 30S pre-initiation complex (PIC). Upon addition of the 50S ribosomal subunit IF-1, IF-2 and IF-3 are released leaving the mature 70S translation initiation complex. This Geobacillus thermodenitrificans (strain NG80-2) protein is Translation initiation factor IF-1.